The following is a 376-amino-acid chain: Carbamoyl phosphate synthase small chain (376 aa).

Residues 1–181 (MSKAVLVLED…VEPDGPPGVS (181 aa)) are nucleophile. The CPSase stretch occupies residues 1-183 (MSKAVLVLED…PDGPPGVSRF (183 aa)). L-glutamine is bound by residues Ser46, Gly232, Gly234, Phe261, Gln264, Asn302, Gly304, and Phe305. Residues 184–376 (TVAALDLGIK…FVELMAGEGR (193 aa)) enclose the Glutamine amidotransferase type-1 domain. Active-site residues include His350 and Glu352.

The protein belongs to the CarA family. Composed of two chains; the small (or glutamine) chain promotes the hydrolysis of glutamine to ammonia, which is used by the large (or ammonia) chain to synthesize carbamoyl phosphate. Tetramer of heterodimers (alpha,beta)4.

The enzyme catalyses hydrogencarbonate + L-glutamine + 2 ATP + H2O = carbamoyl phosphate + L-glutamate + 2 ADP + phosphate + 2 H(+). It carries out the reaction L-glutamine + H2O = L-glutamate + NH4(+). The protein operates within amino-acid biosynthesis; L-arginine biosynthesis; carbamoyl phosphate from bicarbonate: step 1/1. Its pathway is pyrimidine metabolism; UMP biosynthesis via de novo pathway; (S)-dihydroorotate from bicarbonate: step 1/3. Small subunit of the glutamine-dependent carbamoyl phosphate synthetase (CPSase). CPSase catalyzes the formation of carbamoyl phosphate from the ammonia moiety of glutamine, carbonate, and phosphate donated by ATP, constituting the first step of 2 biosynthetic pathways, one leading to arginine and/or urea and the other to pyrimidine nucleotides. The small subunit (glutamine amidotransferase) binds and cleaves glutamine to supply the large subunit with the substrate ammonia. In Mycobacterium tuberculosis (strain CDC 1551 / Oshkosh), this protein is Carbamoyl phosphate synthase small chain.